Consider the following 221-residue polypeptide: Probable septum site-determining protein MinC (221 aa).

This sequence belongs to the MinC family. Interacts with MinD and FtsZ.

Its function is as follows. Cell division inhibitor that blocks the formation of polar Z ring septums. Rapidly oscillates between the poles of the cell to destabilize FtsZ filaments that have formed before they mature into polar Z rings. Prevents FtsZ polymerization. The sequence is that of Probable septum site-determining protein MinC from Shewanella oneidensis (strain ATCC 700550 / JCM 31522 / CIP 106686 / LMG 19005 / NCIMB 14063 / MR-1).